A 369-amino-acid polypeptide reads, in one-letter code: Anhydro-N-acetylmuramic acid kinase (369 aa).

Position 12-19 (12-19) interacts with ATP; the sequence is GTSMDGVD.

This sequence belongs to the anhydro-N-acetylmuramic acid kinase family.

It carries out the reaction 1,6-anhydro-N-acetyl-beta-muramate + ATP + H2O = N-acetyl-D-muramate 6-phosphate + ADP + H(+). Its pathway is amino-sugar metabolism; 1,6-anhydro-N-acetylmuramate degradation. It participates in cell wall biogenesis; peptidoglycan recycling. Functionally, catalyzes the specific phosphorylation of 1,6-anhydro-N-acetylmuramic acid (anhMurNAc) with the simultaneous cleavage of the 1,6-anhydro ring, generating MurNAc-6-P. Is required for the utilization of anhMurNAc either imported from the medium or derived from its own cell wall murein, and thus plays a role in cell wall recycling. The protein is Anhydro-N-acetylmuramic acid kinase of Shewanella amazonensis (strain ATCC BAA-1098 / SB2B).